A 258-amino-acid chain; its full sequence is Regulatory protein RecX (258 aa).

The protein belongs to the RecX family.

It localises to the cytoplasm. Functionally, modulates RecA activity. This is Regulatory protein RecX from Streptococcus gordonii (strain Challis / ATCC 35105 / BCRC 15272 / CH1 / DL1 / V288).